The sequence spans 156 residues: Large ribosomal subunit protein uL22 (156 aa).

The protein belongs to the universal ribosomal protein uL22 family. As to quaternary structure, part of the 50S ribosomal subunit.

In terms of biological role, this protein binds specifically to 23S rRNA. It makes multiple contacts with different domains of the 23S rRNA in the assembled 50S subunit and ribosome. The globular domain of the protein is located near the polypeptide exit tunnel on the outside of the subunit, while an extended beta-hairpin is found that lines the wall of the exit tunnel in the center of the 70S ribosome. The chain is Large ribosomal subunit protein uL22 from Aeropyrum pernix (strain ATCC 700893 / DSM 11879 / JCM 9820 / NBRC 100138 / K1).